Consider the following 411-residue polypeptide: D-ribitol-5-phosphate cytidylyltransferase (411 aa).

It belongs to the IspD/TarI cytidylyltransferase family. IspD subfamily. In terms of assembly, homodimer.

Its subcellular location is the cytoplasm. The protein resides in the cytosol. It catalyses the reaction D-ribitol 5-phosphate + CTP + H(+) = CDP-L-ribitol + diphosphate. The enzyme catalyses D-ribose 5-phosphate + CTP + H(+) = CDP-D-ribose + diphosphate. The catalysed reaction is D-ribulose 5-phosphate + CTP + H(+) = CDP-D-ribulose + diphosphate. Its pathway is protein modification; protein glycosylation. Functionally, cytidylyltransferase required for protein O-linked mannosylation. Catalyzes the formation of CDP-ribitol nucleotide sugar from D-ribitol 5-phosphate. CDP-ribitol is a substrate of FKTN during the biosynthesis of the phosphorylated O-mannosyl trisaccharide (N-acetylgalactosamine-beta-3-N-acetylglucosamine-beta-4-(phosphate-6-)mannose), a carbohydrate structure present in alpha-dystroglycan (DAG1), which is required for binding laminin G-like domain-containing extracellular proteins with high affinity. Shows activity toward other pentose phosphate sugars and mediates formation of CDP-ribulose or CDP-ribose using CTP and ribulose-5-phosphate or ribose-5-phosphate, respectively. Not involved in dolichol production. The polypeptide is D-ribitol-5-phosphate cytidylyltransferase (crppa) (Xenopus tropicalis (Western clawed frog)).